A 116-amino-acid polypeptide reads, in one-letter code: T-cell leukemia/lymphoma protein 1A (116 aa).

The protein belongs to the TCL1 family. In terms of assembly, homodimer. Interacts with AKT1, AKT2 and AKT3 (via PH domain). Interacts with PNPT1; the interaction has no effect on PNPT1 exonuclease activity.

It is found in the cytoplasm. It localises to the nucleus. Its subcellular location is the microsome. The protein localises to the endoplasmic reticulum. Its function is as follows. Enhances the phosphorylation and activation of AKT1 and AKT2. Enhances cell proliferation, stabilizes mitochondrial membrane potential and promotes cell survival. In Mus musculus (Mouse), this protein is T-cell leukemia/lymphoma protein 1A (Tcl1a).